The following is a 409-amino-acid chain: Elongation factor Tu, cyanelle (409 aa).

Residues 10–214 enclose the tr-type G domain; that stretch reads KPHVNIGTIG…AVDEYIPTPE (205 aa). A G1 region spans residues 19-26; that stretch reads GHVDHGKT. 19–26 lines the GTP pocket; the sequence is GHVDHGKT. Residue T26 coordinates Mg(2+). Residues 60–64 form a G2 region; that stretch reads GITIN. A G3 region spans residues 81–84; it reads DCPG. Residues 81–85 and 136–139 contribute to the GTP site; these read DCPGH and NKED. The tract at residues 136–139 is G4; the sequence is NKED. Residues 174–176 form a G5 region; it reads SAL.

This sequence belongs to the TRAFAC class translation factor GTPase superfamily. Classic translation factor GTPase family. EF-Tu/EF-1A subfamily.

Its subcellular location is the plastid. The protein localises to the cyanelle. It carries out the reaction GTP + H2O = GDP + phosphate + H(+). GTP hydrolase that promotes the GTP-dependent binding of aminoacyl-tRNA to the A-site of ribosomes during protein biosynthesis. This Cyanophora paradoxa protein is Elongation factor Tu, cyanelle (tufA).